Reading from the N-terminus, the 541-residue chain is Chaperonin GroEL (541 aa).

ATP is bound by residues 29-32 (TAGP), K50, 86-90 (DGTTT), G416, and D498.

It belongs to the chaperonin (HSP60) family. In terms of assembly, forms a cylinder of 14 subunits composed of two heptameric rings stacked back-to-back. Interacts with the co-chaperonin GroES.

The protein localises to the cytoplasm. It carries out the reaction ATP + H2O + a folded polypeptide = ADP + phosphate + an unfolded polypeptide.. Together with its co-chaperonin GroES, plays an essential role in assisting protein folding. The GroEL-GroES system forms a nano-cage that allows encapsulation of the non-native substrate proteins and provides a physical environment optimized to promote and accelerate protein folding. The chain is Chaperonin GroEL from Anaplasma phagocytophilum (Ehrlichia phagocytophila).